The sequence spans 352 residues: B1 bradykinin receptor (352 aa).

Topologically, residues 1–41 (MASWPPLELQSSNQSQLFPQNATACDNAPEAWDLLHRVLPT) are extracellular. N-linked (GlcNAc...) asparagine glycosylation is found at asparagine 13 and asparagine 21. The chain crosses the membrane as a helical span at residues 42–62 (FIISICSFGLLGNLFVLLVFL). Residues 63–72 (LPRRRLNVAE) lie on the Cytoplasmic side of the membrane. The chain crosses the membrane as a helical span at residues 73–93 (IYLANLAASDLVFVLGLPFWA). Residues 94-110 (ENIWNQFNWPFGALLCR) lie on the Extracellular side of the membrane. A disulfide bridge links cysteine 109 with cysteine 188. Residues 111–131 (GINGVIKANLFISIFLVVAIS) form a helical membrane-spanning segment. At 132 to 153 (QDRYCLLVHPMASRRRQRRRQA) the chain is on the cytoplasmic side. A helical membrane pass occupies residues 154-174 (RVTCVLIWVVGGLLSIPTFLL). The Extracellular segment spans residues 175 to 206 (RSIQAVPDLNITACILLLPHEAWHFARIVELN). A glycan (N-linked (GlcNAc...) asparagine) is linked at asparagine 184. Residues 207–227 (ILAFLLPLAAIVFFNYHILAS) traverse the membrane as a helical segment. Residues 228 to 250 (LRGREEVSRTRCGGRKDSKTTAL) are Cytoplasmic-facing. A helical membrane pass occupies residues 251–271 (ILTLVVAFLVCWAPYHFFAFL). The Extracellular portion of the chain corresponds to 272 to 294 (EFLFQVQAIRSCFWEDFIDLGLQ). The chain crosses the membrane as a helical span at residues 295 to 315 (LANFLAFTNSSLNPVIYVFVG). Topologically, residues 316–352 (RLFRTKVWELYKQCTPKSLAPISSSHRKEIFQLFWRN) are cytoplasmic. Cysteine 329 is lipidated: S-palmitoyl cysteine.

It belongs to the G-protein coupled receptor 1 family. Bradykinin receptor subfamily. BDKRB1 sub-subfamily.

It is found in the cell membrane. This is a receptor for bradykinin. Could be a factor in chronic pain and inflammation. The polypeptide is B1 bradykinin receptor (BDKRB1) (Chlorocebus pygerythrus (Vervet monkey)).